The primary structure comprises 371 residues: MLVGIPTEIKNNEYRVAITPAGVAELTRRGHEVIIQAGAGEGSAISDRDFKAAGAEIVNTADQVWSEAELLLKVKEPIEPEYSRMRKGQTLFTYLHLAASKPCTDALLASGTTSIAYETVQTAEGALPLLAPMSEVAGRLSAQVGAYHLMRSYGGRGVLMGGVPGVAPAEVVVIGAGTAGYNAARVAAGMGAHVTVFDLNINTLRRVDGEFGGRIETRYSSSLELEEAVKKADLVIGAVLVPGAKAPKLVTNSTVAHMKPGAVLVDIAIDQGGCFEDSRPTTHDEPTFKVHDTIFYCVANMPGAVPRTSTFALTNSTMPYVLKLADKGWQAACASDSALAKGLSTHDGKLLSEAVAKDLDLPFTDAAQFLA.

Residues Arg-15 and Lys-75 each coordinate substrate. His-96 serves as the catalytic Proton donor/acceptor. NAD(+) is bound by residues Ser-134, 178-179 (TA), Asp-198, Ser-220, 239-240 (VL), 267-270 (IAID), Arg-279, and 298-301 (VANM). Asp-270 acts as the Proton donor/acceptor in catalysis.

It belongs to the AlaDH/PNT family. Homohexamer. Trimer of dimers.

It is found in the cytoplasm. It carries out the reaction L-alanine + NAD(+) + H2O = pyruvate + NH4(+) + NADH + H(+). It participates in amino-acid degradation; L-alanine degradation via dehydrogenase pathway; NH(3) and pyruvate from L-alanine: step 1/1. Functionally, catalyzes the reversible reductive amination of pyruvate to L-alanine. Required for proficient utilization of D- or L-alanine as a nitrogen source. May be required for the adaptation from aerobic growth to anaerobic dormancy. It could be involved in the maintenance of the NAD pool during the shift to an anaerobic dormant state in which oxygen as a terminal electron acceptor becomes limiting. This Mycolicibacterium smegmatis (strain ATCC 700084 / mc(2)155) (Mycobacterium smegmatis) protein is Alanine dehydrogenase.